Reading from the N-terminus, the 427-residue chain is L-glutamine:2-deoxy-scyllo-inosose aminotransferase (427 aa).

Positions 1–20 (MPLQSSRLAVDNGTPVRGKP) are disordered. Lysine 205 bears the N6-(pyridoxal phosphate)lysine mark.

The protein belongs to the DegT/DnrJ/EryC1 family. L-glutamine:2-deoxy-scyllo-inosose/scyllo-inosose aminotransferase subfamily. Pyridoxal 5'-phosphate is required as a cofactor.

The catalysed reaction is 2-deoxy-L-scyllo-inosose + L-glutamine = 2-deoxy-scyllo-inosamine + 2-oxoglutaramate. It carries out the reaction 3-amino-2,3-dideoxy-scyllo-inosose + L-glutamine = 2-deoxystreptamine + 2-oxoglutaramate. The protein operates within metabolic intermediate biosynthesis; 2-deoxystreptamine biosynthesis; 2-deoxystreptamine from D-glucose 6-phosphate: step 2/4. It functions in the pathway antibiotic biosynthesis; kanamycin biosynthesis. In terms of biological role, catalyzes the PLP-dependent transamination of 2-deoxy-scyllo-inosose (2-DOI) to form 2-deoxy-scyllo-inosamine (2-DOIA) using L-glutamine as the amino donor. Also catalyzes the transamination of 3-amino-2,3-dideoxy-scyllo-inosose (keto-2-DOIA) into 2-deoxystreptamine (2-DOS). This Streptomyces kanamyceticus protein is L-glutamine:2-deoxy-scyllo-inosose aminotransferase (kanB).